We begin with the raw amino-acid sequence, 677 residues long: DNA ligase (677 aa).

Residues 36-40, 85-86, and Glu122 contribute to the NAD(+) site; these read DAEYD and SI. Residue Lys124 is the N6-AMP-lysine intermediate of the active site. Positions 145, 181, 298, and 322 each coordinate NAD(+). Residues Cys416, Cys419, Cys434, and Cys440 each contribute to the Zn(2+) site. The BRCT domain occupies 600–677; sequence LTPRPLAGKT…DEAALRALLD (78 aa).

This sequence belongs to the NAD-dependent DNA ligase family. LigA subfamily. Requires Mg(2+) as cofactor. Mn(2+) serves as cofactor.

The enzyme catalyses NAD(+) + (deoxyribonucleotide)n-3'-hydroxyl + 5'-phospho-(deoxyribonucleotide)m = (deoxyribonucleotide)n+m + AMP + beta-nicotinamide D-nucleotide.. Functionally, DNA ligase that catalyzes the formation of phosphodiester linkages between 5'-phosphoryl and 3'-hydroxyl groups in double-stranded DNA using NAD as a coenzyme and as the energy source for the reaction. It is essential for DNA replication and repair of damaged DNA. The polypeptide is DNA ligase (Methylibium petroleiphilum (strain ATCC BAA-1232 / LMG 22953 / PM1)).